A 250-amino-acid polypeptide reads, in one-letter code: 2,3-bisphosphoglycerate-dependent phosphoglycerate mutase (250 aa).

Residues 10–17, 23–24, Arg62, 89–92, Lys100, 116–117, and 185–186 each bind substrate; these read RHGESQWN, TG, ERHY, RR, and GN. The active-site Tele-phosphohistidine intermediate is the His11. Glu89 acts as the Proton donor/acceptor in catalysis.

Belongs to the phosphoglycerate mutase family. BPG-dependent PGAM subfamily. In terms of assembly, homodimer.

The enzyme catalyses (2R)-2-phosphoglycerate = (2R)-3-phosphoglycerate. Its pathway is carbohydrate degradation; glycolysis; pyruvate from D-glyceraldehyde 3-phosphate: step 3/5. Functionally, catalyzes the interconversion of 2-phosphoglycerate and 3-phosphoglycerate. The sequence is that of 2,3-bisphosphoglycerate-dependent phosphoglycerate mutase from Cronobacter sakazakii (strain ATCC BAA-894) (Enterobacter sakazakii).